The chain runs to 500 residues: Autophagy-related protein 18 (500 aa).

The interval 192–212 is disordered; it reads DITGQQQQQQPGVDPATSNNT. WD repeat units lie at residues 238 to 278 and 283 to 322; these read AHKG…KVYQ and TYPT…VDNK. A L/FRRG motif motif is present at residues 279–283; it reads FRRGT. The disordered stretch occupies residues 320-374; the sequence is DNKSNELNSDDEIEDDLVPRYGDEDEEDEEIDEEATSINSNHSSKEPVVDAKRST. Acidic residues predominate over residues 342 to 354; that stretch reads DEDEEDEEIDEEA. Residues 362-372 show a composition bias toward basic and acidic residues; that stretch reads SSKEPVVDAKR.

It belongs to the WD repeat PROPPIN family. In terms of assembly, component of the PI(3,5)P2 regulatory complex.

Its subcellular location is the preautophagosomal structure membrane. The protein resides in the vacuole membrane. It is found in the endosome membrane. Its function is as follows. The PI(3,5)P2 regulatory complex regulates both the synthesis and turnover of phosphatidylinositol 3,5-bisphosphate (PtdIns(3,5)P2). Necessary for proper vacuole morphology. Plays an important role in osmotically-induced vacuole fragmentation. Required for cytoplasm to vacuole transport (Cvt) vesicle formation, pexophagy and starvation-induced autophagy. Involved in correct ATG9 trafficking to the pre-autophagosomal structure. Might also be involved in premeiotic DNA replication. The chain is Autophagy-related protein 18 (ATG18) from Kluyveromyces lactis (strain ATCC 8585 / CBS 2359 / DSM 70799 / NBRC 1267 / NRRL Y-1140 / WM37) (Yeast).